Here is a 130-residue protein sequence, read N- to C-terminus: L-ectoine synthase (130 aa).

It belongs to the ectoine synthase family.

The catalysed reaction is (2S)-4-acetamido-2-aminobutanoate = L-ectoine + H2O. It participates in amine and polyamine biosynthesis; ectoine biosynthesis; L-ectoine from L-aspartate 4-semialdehyde: step 3/3. In terms of biological role, catalyzes the circularization of gamma-N-acetyl-alpha,gamma-diaminobutyric acid (ADABA) to ectoine (1,4,5,6-tetrahydro-2-methyl-4-pyrimidine carboxylic acid), which is an excellent osmoprotectant. The polypeptide is L-ectoine synthase (Mycolicibacterium vanbaalenii (strain DSM 7251 / JCM 13017 / BCRC 16820 / KCTC 9966 / NRRL B-24157 / PYR-1) (Mycobacterium vanbaalenii)).